The primary structure comprises 387 residues: 4-hydroxy-3-methylbut-2-en-1-yl diphosphate synthase (flavodoxin) (387 aa).

Positions 272, 275, 307, and 314 each coordinate [4Fe-4S] cluster.

Belongs to the IspG family. [4Fe-4S] cluster is required as a cofactor.

The enzyme catalyses (2E)-4-hydroxy-3-methylbut-2-enyl diphosphate + oxidized [flavodoxin] + H2O + 2 H(+) = 2-C-methyl-D-erythritol 2,4-cyclic diphosphate + reduced [flavodoxin]. The protein operates within isoprenoid biosynthesis; isopentenyl diphosphate biosynthesis via DXP pathway; isopentenyl diphosphate from 1-deoxy-D-xylulose 5-phosphate: step 5/6. Converts 2C-methyl-D-erythritol 2,4-cyclodiphosphate (ME-2,4cPP) into 1-hydroxy-2-methyl-2-(E)-butenyl 4-diphosphate. The protein is 4-hydroxy-3-methylbut-2-en-1-yl diphosphate synthase (flavodoxin) of Granulibacter bethesdensis (strain ATCC BAA-1260 / CGDNIH1).